The chain runs to 233 residues: ATP synthase subunit C lysine N-methyltransferase (233 aa).

The residue at position 1 (M1) is an N-acetylmethionine. Residues 38–58 (FLLTGLVGGTLVAVYAVATPF) traverse the membrane as a helical segment. The segment at 56-90 (TPFVTPALRKVCLPFVPATTKQIENVVKMLRCRRG) is required for mitochondrial location.

Belongs to the ANT/ATPSC lysine N-methyltransferase family. As to expression, ubiquitously expressed.

The protein resides in the mitochondrion membrane. The catalysed reaction is L-lysyl-[protein] + 3 S-adenosyl-L-methionine = N(6),N(6),N(6)-trimethyl-L-lysyl-[protein] + 3 S-adenosyl-L-homocysteine + 3 H(+). Mitochondrial protein-lysine N-methyltransferase that trimethylates ATP synthase subunit C, ATP5MC1 and ATP5MC2. Trimethylation is required for proper incorporation of the C subunit into the ATP synthase complex and mitochondrial respiration. Promotes chronic pain. Involved in persistent inflammatory and neuropathic pain: methyltransferase activity in the mitochondria of sensory neurons promotes chronic pain via a pathway that depends on the production of reactive oxygen species (ROS) and on the engagement of spinal cord microglia. The chain is ATP synthase subunit C lysine N-methyltransferase from Homo sapiens (Human).